We begin with the raw amino-acid sequence, 175 residues long: Protein-export protein SecB (175 aa).

Positions glutamine 154–glutamine 175 are disordered.

Belongs to the SecB family. In terms of assembly, homotetramer, a dimer of dimers. One homotetramer interacts with 1 SecA dimer.

Its subcellular location is the cytoplasm. One of the proteins required for the normal export of preproteins out of the cell cytoplasm. It is a molecular chaperone that binds to a subset of precursor proteins, maintaining them in a translocation-competent state. It also specifically binds to its receptor SecA. This chain is Protein-export protein SecB, found in Bordetella petrii (strain ATCC BAA-461 / DSM 12804 / CCUG 43448).